The following is a 241-amino-acid chain: MNFRDKAIILKKRNIKENLAIVTVLTQSYGIYSGIIKDLHSKKNTIIYQIGNIVDFCWSARLDKHLGTINCELVKSYSYLIMSNKRNLFYTHSLIELTLMSFKERELHANLFEKWLGNLESINVGNINIKNYINFELLILKEAGYQLTLDRCGVTNCTQNLIYVSPKSGQAISAAVGEPYKHKLLLLPKFLVHNNCEPEDIYEIQAAFNLTAYFFNKYVLIKKKLPIARELLLKSILAYSF.

This sequence belongs to the RecO family.

In terms of biological role, involved in DNA repair and RecF pathway recombination. The protein is DNA repair protein RecO of Orientia tsutsugamushi (strain Boryong) (Rickettsia tsutsugamushi).